Here is a 203-residue protein sequence, read N- to C-terminus: Auxin-responsive protein IAA4 (203 aa).

The tract at residues 1 to 31 (MEECKGGGMSPSSSMDSSTHPALSTTSSAAT) is disordered. Residues 10-31 (SPSSSMDSSTHPALSTTSSAAT) show a composition bias toward low complexity. Residues 40-44 (LRLGL) carry the EAR-like (transcriptional repression) motif. The PB1 domain occupies 108 to 202 (TLFVKVYMEG…KKLRIARMDK (95 aa)).

The protein belongs to the Aux/IAA family. In terms of assembly, homodimers and heterodimers.

The protein localises to the nucleus. Functionally, aux/IAA proteins are short-lived transcriptional factors that function as repressors of early auxin response genes at low auxin concentrations. The chain is Auxin-responsive protein IAA4 (IAA4) from Oryza sativa subsp. japonica (Rice).